A 127-amino-acid polypeptide reads, in one-letter code: Large ribosomal subunit protein bL20 (127 aa).

This sequence belongs to the bacterial ribosomal protein bL20 family.

In terms of biological role, binds directly to 23S ribosomal RNA and is necessary for the in vitro assembly process of the 50S ribosomal subunit. It is not involved in the protein synthesizing functions of that subunit. In Renibacterium salmoninarum (strain ATCC 33209 / DSM 20767 / JCM 11484 / NBRC 15589 / NCIMB 2235), this protein is Large ribosomal subunit protein bL20.